The following is a 104-amino-acid chain: Small ribosomal subunit protein uS10 (104 aa).

The protein belongs to the universal ribosomal protein uS10 family. Part of the 30S ribosomal subunit.

In terms of biological role, involved in the binding of tRNA to the ribosomes. The polypeptide is Small ribosomal subunit protein uS10 (Alkaliphilus metalliredigens (strain QYMF)).